The sequence spans 50 residues: uncharacterized protein (50 aa).

The chain crosses the membrane as a helical span at residues 10–29 (LFFYYPFFIIFLYIYLVFFI).

Its subcellular location is the plastid. It is found in the chloroplast membrane. This is an uncharacterized protein from Marchantia polymorpha (Common liverwort).